Consider the following 405-residue polypeptide: L-carnitine CoA-transferase (405 aa).

CoA contacts are provided by lysine 97 and arginine 104. The active-site Nucleophile is aspartate 169.

This sequence belongs to the CoA-transferase III family. CaiB subfamily. In terms of assembly, homodimer.

The protein localises to the cytoplasm. It carries out the reaction crotonobetainyl-CoA + (R)-carnitine = crotonobetaine + (R)-carnitinyl-CoA. The enzyme catalyses 4-(trimethylamino)butanoyl-CoA + (R)-carnitine = (R)-carnitinyl-CoA + 4-(trimethylamino)butanoate. It functions in the pathway amine and polyamine metabolism; carnitine metabolism. In terms of biological role, catalyzes the reversible transfer of the CoA moiety from gamma-butyrobetainyl-CoA to L-carnitine to generate L-carnitinyl-CoA and gamma-butyrobetaine. Is also able to catalyze the reversible transfer of the CoA moiety from gamma-butyrobetainyl-CoA or L-carnitinyl-CoA to crotonobetaine to generate crotonobetainyl-CoA. This chain is L-carnitine CoA-transferase, found in Escherichia coli O127:H6 (strain E2348/69 / EPEC).